The primary structure comprises 166 residues: MDMTNAQRLILSNQYYLMSQLTPENEAKYRRLQTIVERGYGLQMRELDKDFGCLPEDACRNIIDYMEMHHALQESYKMLDDASQSQVEPRRLQFLGFDAATESQQVHYVRFLTEEEGLYPQFDKSEHQFNSQVQMQDKYQRMLQTWRNCPRQYHLSSSEITQILSA.

This sequence belongs to the UPF0304 family.

This chain is UPF0304 protein PBPRA2768, found in Photobacterium profundum (strain SS9).